The primary structure comprises 339 residues: UDP-N-acetylglucosamine--N-acetylmuramyl-(pentapeptide) pyrophosphoryl-undecaprenol N-acetylglucosamine transferase (339 aa).

Residues 11 to 13 (TGG), N127, R170, S188, I235, and Q280 contribute to the UDP-N-acetyl-alpha-D-glucosamine site.

The protein belongs to the glycosyltransferase 28 family. MurG subfamily.

The protein localises to the cell inner membrane. The enzyme catalyses di-trans,octa-cis-undecaprenyl diphospho-N-acetyl-alpha-D-muramoyl-L-alanyl-D-glutamyl-meso-2,6-diaminopimeloyl-D-alanyl-D-alanine + UDP-N-acetyl-alpha-D-glucosamine = di-trans,octa-cis-undecaprenyl diphospho-[N-acetyl-alpha-D-glucosaminyl-(1-&gt;4)]-N-acetyl-alpha-D-muramoyl-L-alanyl-D-glutamyl-meso-2,6-diaminopimeloyl-D-alanyl-D-alanine + UDP + H(+). The protein operates within cell wall biogenesis; peptidoglycan biosynthesis. Functionally, cell wall formation. Catalyzes the transfer of a GlcNAc subunit on undecaprenyl-pyrophosphoryl-MurNAc-pentapeptide (lipid intermediate I) to form undecaprenyl-pyrophosphoryl-MurNAc-(pentapeptide)GlcNAc (lipid intermediate II). The protein is UDP-N-acetylglucosamine--N-acetylmuramyl-(pentapeptide) pyrophosphoryl-undecaprenol N-acetylglucosamine transferase of Thermotoga petrophila (strain ATCC BAA-488 / DSM 13995 / JCM 10881 / RKU-1).